A 266-amino-acid polypeptide reads, in one-letter code: uncharacterized protein (266 aa).

Belongs to the ascovirus HvAV ORF59 family.

This is an uncharacterized protein from Trichoplusia ni ascovirus 2c (TnAV-2c).